A 287-amino-acid polypeptide reads, in one-letter code: Ribosomal RNA small subunit methyltransferase I (287 aa).

It belongs to the methyltransferase superfamily. RsmI family.

The protein resides in the cytoplasm. It carries out the reaction cytidine(1402) in 16S rRNA + S-adenosyl-L-methionine = 2'-O-methylcytidine(1402) in 16S rRNA + S-adenosyl-L-homocysteine + H(+). Its function is as follows. Catalyzes the 2'-O-methylation of the ribose of cytidine 1402 (C1402) in 16S rRNA. This Streptococcus pyogenes serotype M6 (strain ATCC BAA-946 / MGAS10394) protein is Ribosomal RNA small subunit methyltransferase I.